The primary structure comprises 728 residues: MVAIPRLARLSVPAWALSARGRFYATVSTPQTLVEKIVQKYAVGLSEGVKVRAGDYVMIKPEHVMTHDNTGPVISKFLSLSCSKLDNPRQPVFALDHDVQNQSETNQKKYKKIQAFAKEHGVDFYPAGRGIGHQIIVEEGYAWPGKMVVASDSHSNHYGGVGCLGTAIVRTDAAGIWATGKFWWQIPRIVSVSLDGRLSPGVTGKDVIVALAGLFNKDEVLNAAIEFTGSGVEHLSIDERLTIANMTTEWGAVAGVFPVDDKLKEWYQGILRKAELRKFISPTVPSTVGAKVHPRLNAARLDDAMTNRVVADPGAHYAARLSLDLSTLVPHVSGPNSVKVATALPKLLDPPIPINKAYLVSCTNSRASDIASAAQVLRGKKVAPGVEFYIAAASSRVQEDAEAAGDWQTLIDAGAKTLPAGCGPCIGLGVGLLEKGEVGISATNRNYKGRMGSPDAIAYLASPAVVAASAAKGVICGPESMDLSQLPQYEQPKFSIIEEGAAGEEKPVEVDEASLEPLLEGFPAYFEGPLLFAPQDNLTTDGMYPGKYTYQDDITPERQAEVVMENYDPTFAATARELRTALPTASSPSTLPGAILLSGYNFGTGSSREQAATAIKNAGIPLVICGSFGDIFKRNSINNGLILIESPSLIKDMTERFAKDGVRNKGGKDGKLTVVPEGWRIKVDSQRGLVTVNMGEEEEKTYPAAKVGRSVQELWVNGGLEGFIRASL.

A mitochondrion-targeting transit peptide spans 1–24; the sequence is MVAIPRLARLSVPAWALSARGRFY. Residues Cys-362, Cys-422, and Cys-425 each contribute to the [4Fe-4S] cluster site.

The protein belongs to the aconitase/IPM isomerase family. [4Fe-4S] cluster serves as cofactor.

It localises to the mitochondrion. It catalyses the reaction (2R,3S)-homoisocitrate = cis-homoaconitate + H2O. It participates in amino-acid biosynthesis; L-lysine biosynthesis via AAA pathway; L-alpha-aminoadipate from 2-oxoglutarate: step 3/5. Functionally, catalyzes the reversible hydration of cis-homoaconitate to (2R,3S)-homoisocitrate, a step in the alpha-aminoadipate pathway for lysine biosynthesis. This Cryptococcus neoformans var. neoformans serotype D (strain JEC21 / ATCC MYA-565) (Filobasidiella neoformans) protein is Homoaconitase, mitochondrial (LYS4).